The chain runs to 858 residues: Myosin-K heavy chain (858 aa).

The Myosin motor domain maps to 7–820; it reads SGVDDLVLVS…TIFVMEDLLM (814 aa). 100–107 contributes to the ATP binding site; it reads GESGAGKT. The interval 121-265 is disordered; that stretch reads SPNNSSGGGI…GGGYGGSSKT (145 aa). 2 stretches are compositionally biased toward gly residues: residues 126-139 and 157-182; these read SGGG…GNGG and RGMG…SRGG. Residues 183–228 are compositionally biased toward pro residues; it reads GPPPTRGRGGPPPPIPQNRGAPPPVSNGGAPPPVARGPVAPPPTRG. The segment covering 233–245 has biased composition (gly residues); sequence RGGGPANRGGRGG. Residues 712-722 are actin-binding; it reads PHYIRCIKPND. The segment at 821-858 is tail; it reads QKIDPIGYKNRVQAYKENEKLAQMKQGKHSMKQKCLIQ.

It belongs to the TRAFAC class myosin-kinesin ATPase superfamily. Myosin family.

Its subcellular location is the cytoplasm. In terms of biological role, myosins are actin-based motor molecules with ATPase activity. Involved in phagocytosis and motility, and in the maintenance and dynamics of cell cortex. This chain is Myosin-K heavy chain (myoK), found in Dictyostelium discoideum (Social amoeba).